The chain runs to 110 residues: Iron-sulfur cluster assembly protein CyaY (110 aa).

Belongs to the frataxin family.

Involved in iron-sulfur (Fe-S) cluster assembly. May act as a regulator of Fe-S biogenesis. The chain is Iron-sulfur cluster assembly protein CyaY from Pseudomonas fluorescens (strain SBW25).